The primary structure comprises 435 residues: Membrane-bound ghrelin O-acyltransferase MBOAT4 (435 aa).

The Lumenal segment spans residues Met-1–Gln-5. Residues Leu-6–Phe-26 traverse the membrane as a helical segment. Residues Asn-27–Arg-40 are Cytoplasmic-facing. A helical membrane pass occupies residues Tyr-41 to Met-56. Residues Gly-57–Tyr-59 are Lumenal-facing. A helical membrane pass occupies residues Ser-60–Phe-76. The Cytoplasmic segment spans residues Leu-77–Val-82. Residues His-83–Leu-101 traverse the membrane as a helical segment. The Lumenal portion of the chain corresponds to His-102–Leu-120. A helical transmembrane segment spans residues Ser-121–Asp-136. Residues Ile-137–Thr-206 lie on the Cytoplasmic side of the membrane. A helical transmembrane segment spans residues Trp-207 to Ser-227. The Lumenal portion of the chain corresponds to Ala-228 to Cys-240. Residues Ile-241 to Leu-261 form a helical membrane-spanning segment. Residues Asp-262–Arg-324 are Cytoplasmic-facing. Active-site residues include Asn-307 and His-338. The chain crosses the membrane as a helical span at residues Trp-325–His-338. The Lumenal portion of the chain corresponds to Gly-339–Leu-340. A helical membrane pass occupies residues His-341–Ala-357. Over Asp-358–Leu-376 the chain is Cytoplasmic. Residues Leu-377 to Val-397 form a helical membrane-spanning segment. Residues Glu-398–Gln-407 lie on the Lumenal side of the membrane. The helical transmembrane segment at Leu-408 to Ala-428 threads the bilayer. Residues Glu-429 to Asn-435 lie on the Cytoplasmic side of the membrane.

It belongs to the membrane-bound acyltransferase family. In terms of assembly, monomer. In terms of processing, not glycosylated. In terms of tissue distribution, highly expressed in stomach and pancreas. Lower expression in small intestine and colon. Very low expression in testis.

It localises to the endoplasmic reticulum membrane. The catalysed reaction is octanoyl-CoA + L-seryl-[protein] = O-octanoyl-L-seryl-[protein] + CoA. It catalyses the reaction hexanoyl-CoA + L-seryl-[protein] = O-hexanoyl-L-seryl-[protein] + CoA. The enzyme catalyses decanoyl-CoA + L-seryl-[protein] = O-decanoyl-L-seryl-[protein] + CoA. It carries out the reaction L-seryl-[protein] + acetyl-CoA = O-acetyl-L-seryl-[protein] + CoA. The catalysed reaction is L-seryl-[protein] + butanoyl-CoA = O-butanoyl-L-seryl-[protein] + CoA. It catalyses the reaction pentanoyl-CoA + L-seryl-[protein] = O-pentanoyl-L-seryl-[protein] + CoA. The enzyme catalyses heptanoyl-CoA + L-seryl-[protein] = O-heptanoyl-L-seryl-[protein] + CoA. It carries out the reaction nonanoyl-CoA + L-seryl-[protein] = O-nonanoyl-L-seryl-[protein] + CoA. The catalysed reaction is L-seryl-[protein] + dodecanoyl-CoA = O-dodecanoyl-L-seryl-[protein] + CoA. It catalyses the reaction L-seryl-[protein] + tetradecanoyl-CoA = O-tetradecanoyl-L-seryl-[protein] + CoA. The enzyme catalyses a fatty acyl-CoA + L-seryl-[protein] = O-fatty acyl-L-seryl-[protein] + CoA. With respect to regulation, inhibited by 1-[2-cyano-3,12-dioxooleana-1,9(11)- dien-28-oyl]ethylamide (CDDO-EA) with an IC(50) of 60 uM. Inhibited by Fe3+ and Cu2+ and the O-acyltransferase activity is completely blocked over 5 mM Fe3+ and 0.5 mM Cu2+. Catalyzes ghrelin acylation at 'Ser-3' using preferentially octanoyl-CoA, hexanoyl-CoA and decanoyl-CoA as acyl-CoA donors leading to ghrelin activity. In vitro also uses acyl-CoA donors of different lengths from short-chain (C2) to long-chain fatty acids (C16) knowing that acyl-CoA donors from butanoyl-CoA (C4) to dodecanoyl-CoA (C12) are more efficient compared to longer acyl-CoA donors, such as myristoyl-CoA (C14) and palmitoyl-CoA (C16) that are not efficient. Its function is as follows. Inactive octanoyltransferase activity. This Mus musculus (Mouse) protein is Membrane-bound ghrelin O-acyltransferase MBOAT4.